The primary structure comprises 423 residues: Gamma-glutamyl phosphate reductase (423 aa).

Belongs to the gamma-glutamyl phosphate reductase family.

It localises to the cytoplasm. It catalyses the reaction L-glutamate 5-semialdehyde + phosphate + NADP(+) = L-glutamyl 5-phosphate + NADPH + H(+). The protein operates within amino-acid biosynthesis; L-proline biosynthesis; L-glutamate 5-semialdehyde from L-glutamate: step 2/2. Functionally, catalyzes the NADPH-dependent reduction of L-glutamate 5-phosphate into L-glutamate 5-semialdehyde and phosphate. The product spontaneously undergoes cyclization to form 1-pyrroline-5-carboxylate. In Pseudomonas putida (strain W619), this protein is Gamma-glutamyl phosphate reductase.